We begin with the raw amino-acid sequence, 263 residues long: Diphthine synthase (263 aa).

Residues leucine 9, aspartate 84, methionine 87, serine 112–isoleucine 113, leucine 164, alanine 207, and histidine 232 contribute to the S-adenosyl-L-methionine site.

This sequence belongs to the diphthine synthase family. In terms of assembly, homodimer.

The enzyme catalyses 2-[(3S)-amino-3-carboxypropyl]-L-histidyl-[translation elongation factor 2] + 3 S-adenosyl-L-methionine = diphthine-[translation elongation factor 2] + 3 S-adenosyl-L-homocysteine + 3 H(+). Its pathway is protein modification; peptidyl-diphthamide biosynthesis. In terms of biological role, S-adenosyl-L-methionine-dependent methyltransferase that catalyzes the trimethylation of the amino group of the modified target histidine residue in translation elongation factor 2 (EF-2), to form an intermediate called diphthine. The three successive methylation reactions represent the second step of diphthamide biosynthesis. This chain is Diphthine synthase, found in Methanosphaera stadtmanae (strain ATCC 43021 / DSM 3091 / JCM 11832 / MCB-3).